An 878-amino-acid polypeptide reads, in one-letter code: Phosphoenolpyruvate carboxylase (878 aa).

Catalysis depends on residues His-140 and Lys-545.

The protein belongs to the PEPCase type 1 family. Mg(2+) is required as a cofactor.

It carries out the reaction oxaloacetate + phosphate = phosphoenolpyruvate + hydrogencarbonate. Its function is as follows. Forms oxaloacetate, a four-carbon dicarboxylic acid source for the tricarboxylic acid cycle. In Pseudomonas paraeruginosa (strain DSM 24068 / PA7) (Pseudomonas aeruginosa (strain PA7)), this protein is Phosphoenolpyruvate carboxylase.